The following is a 405-amino-acid chain: MQIFLVLALCGLAAAVPSEDRKLSDKATTLADRSTTLAFNLYHAMAKDKNMENILLSPVVVASSLGLVSLGGKATTASQAKAVLSADKLNDDYVHSGLSELLNEVSNSTARNVTWKIGNRLYGPASINFADDFVKNSKKHYNYEHSKINFRDKRSALKSINEWAAQTTDGKLPEVTKDVEKTDGALIVNAMFFKPHWDEKFHHKMVDNRGFMVTRSYTVGVPMMHRTGLYNYYDDEAEKLQVVEMPLAHKLSSMIFIMPNHVEPLERVEKLLNREQLKTWASKMKKRSVAISLPKVVLEVSHDLQKHLADLGLTEAIDKTKADLSKISGKKDLYLSNVFHAAALEWDTDGNPYDADIYGREEMRNPKLFYADHPFIFMIKDSKTNSILFIGRLVRPKGDKMRDEL.

The first 15 residues, 1–15 (MQIFLVLALCGLAAA), serve as a signal peptide directing secretion. N-linked (GlcNAc...) asparagine glycans are attached at residues Asn-107 and Asn-112. Positions 402-405 (RDEL) match the Prevents secretion from ER motif.

The protein belongs to the serpin family.

Its subcellular location is the endoplasmic reticulum lumen. In terms of biological role, binds specifically to collagen. Could be involved as a chaperone in the biosynthetic pathway of collagen. This is Serpin H1 (SERPINH1) from Gallus gallus (Chicken).